A 279-amino-acid polypeptide reads, in one-letter code: Pantothenate synthetase (279 aa).

An ATP-binding site is contributed by 26 to 33 (MGNLHEGH). Histidine 33 (proton donor) is an active-site residue. (R)-pantoate is bound at residue glutamine 57. Residue glutamine 57 participates in beta-alanine binding. 144–147 (GKKD) contributes to the ATP binding site. Glutamine 150 is a binding site for (R)-pantoate. ATP contacts are provided by residues valine 173 and 181–184 (LSSR).

Belongs to the pantothenate synthetase family. In terms of assembly, homodimer.

The protein localises to the cytoplasm. It catalyses the reaction (R)-pantoate + beta-alanine + ATP = (R)-pantothenate + AMP + diphosphate + H(+). It functions in the pathway cofactor biosynthesis; (R)-pantothenate biosynthesis; (R)-pantothenate from (R)-pantoate and beta-alanine: step 1/1. Catalyzes the condensation of pantoate with beta-alanine in an ATP-dependent reaction via a pantoyl-adenylate intermediate. This Burkholderia orbicola (strain MC0-3) protein is Pantothenate synthetase.